The chain runs to 268 residues: Glutamate racemase (268 aa).

Substrate-binding positions include 14-15 and 46-47; these read DS and YG. Catalysis depends on Cys-78, which acts as the Proton donor/acceptor. Residue 79-80 participates in substrate binding; that stretch reads NT. The active-site Proton donor/acceptor is Cys-192. 193–194 is a substrate binding site; sequence TH.

The protein belongs to the aspartate/glutamate racemases family.

The catalysed reaction is L-glutamate = D-glutamate. It participates in cell wall biogenesis; peptidoglycan biosynthesis. Provides the (R)-glutamate required for cell wall biosynthesis. In Sphingopyxis alaskensis (strain DSM 13593 / LMG 18877 / RB2256) (Sphingomonas alaskensis), this protein is Glutamate racemase.